The following is a 192-amino-acid chain: MYQDLIRNELNEAAETLANFLKDDANIHAIQRAAVLLADSFKGGGKVLSCGNGGSHCDAMHFAEELTGRYRENRPGYPAIAISDVSHISCVGNDFGFNDIFSRYVEAVGREGDVLLGISTSGNSANVIKAIAAAREKGMKVITLTGKDGGKMAGTADIEIRVPHFGYADRIQEIHIKVIHILIQLIEKEMVK.

The region spanning 37-192 is the SIS domain; the sequence is LADSFKGGGK…IQLIEKEMVK (156 aa). Residue 52–54 participates in substrate binding; sequence NGG. 2 residues coordinate Zn(2+): H61 and E65. Substrate contacts are provided by residues E65, 93 to 94, 119 to 121, S124, and Q172; these read ND and STS. Residues Q172 and H180 each coordinate Zn(2+).

The protein belongs to the SIS family. GmhA subfamily. In terms of assembly, homotetramer. It depends on Zn(2+) as a cofactor.

The protein localises to the cytoplasm. It catalyses the reaction 2 D-sedoheptulose 7-phosphate = D-glycero-alpha-D-manno-heptose 7-phosphate + D-glycero-beta-D-manno-heptose 7-phosphate. It functions in the pathway carbohydrate biosynthesis; D-glycero-D-manno-heptose 7-phosphate biosynthesis; D-glycero-alpha-D-manno-heptose 7-phosphate and D-glycero-beta-D-manno-heptose 7-phosphate from sedoheptulose 7-phosphate: step 1/1. Catalyzes the isomerization of sedoheptulose 7-phosphate in D-glycero-D-manno-heptose 7-phosphate. The chain is Phosphoheptose isomerase from Escherichia coli O7:K1 (strain IAI39 / ExPEC).